A 563-amino-acid chain; its full sequence is Arginine--tRNA ligase (563 aa).

The short motif at 120 to 130 (PNIAKPFHIGH) is the 'HIGH' region element.

This sequence belongs to the class-I aminoacyl-tRNA synthetase family. Monomer.

Its subcellular location is the cytoplasm. It catalyses the reaction tRNA(Arg) + L-arginine + ATP = L-arginyl-tRNA(Arg) + AMP + diphosphate. The polypeptide is Arginine--tRNA ligase (Clostridium botulinum (strain Langeland / NCTC 10281 / Type F)).